Here is a 226-residue protein sequence, read N- to C-terminus: Thymidylate kinase (226 aa).

An ATP-binding site is contributed by 12 to 19 (GIDGAGKS).

Belongs to the thymidylate kinase family.

The enzyme catalyses dTMP + ATP = dTDP + ADP. Functionally, phosphorylation of dTMP to form dTDP in both de novo and salvage pathways of dTTP synthesis. The protein is Thymidylate kinase of Verminephrobacter eiseniae (strain EF01-2).